The following is a 423-amino-acid chain: Putative competence-damage inducible protein (423 aa).

This sequence belongs to the CinA family.

The polypeptide is Putative competence-damage inducible protein (Streptococcus pyogenes serotype M3 (strain ATCC BAA-595 / MGAS315)).